Reading from the N-terminus, the 703-residue chain is Elongation factor G 2 (703 aa).

Residues 8–291 form the tr-type G domain; the sequence is ELYRNIGIVA…AVIDYLPAPS (284 aa). GTP is bound by residues 17-24, 89-93, and 143-146; these read AHVDAGKT, DTPGH, and NKMD.

Belongs to the TRAFAC class translation factor GTPase superfamily. Classic translation factor GTPase family. EF-G/EF-2 subfamily.

It is found in the cytoplasm. Its function is as follows. Catalyzes the GTP-dependent ribosomal translocation step during translation elongation. During this step, the ribosome changes from the pre-translocational (PRE) to the post-translocational (POST) state as the newly formed A-site-bound peptidyl-tRNA and P-site-bound deacylated tRNA move to the P and E sites, respectively. Catalyzes the coordinated movement of the two tRNA molecules, the mRNA and conformational changes in the ribosome. This chain is Elongation factor G 2 (fusB), found in Pseudomonas putida (strain ATCC 47054 / DSM 6125 / CFBP 8728 / NCIMB 11950 / KT2440).